Reading from the N-terminus, the 320-residue chain is uncharacterized protein (320 aa).

The next 7 helical transmembrane spans lie at 107 to 127 (LSKENMLMLILSTIVAIAGIY), 131 to 151 (VALLIASMIIAPLLGPNIALS), 169 to 189 (LIAELIFVIILSMIAGHYLPI), 200 to 220 (ITLDFWSIIIALSAGIAGSLS), 228 to 248 (IAVGVMIAIALLPPLAVFGLL), 260 to 280 (ALILFLINMIAINLSAIVIFS), and 299 to 319 (TLYAILLWVTLFIAIFVLIIY).

The protein resides in the cell membrane. This is an uncharacterized protein from Methanocaldococcus jannaschii (strain ATCC 43067 / DSM 2661 / JAL-1 / JCM 10045 / NBRC 100440) (Methanococcus jannaschii).